A 396-amino-acid chain; its full sequence is Elongation factor Tu (396 aa).

A tr-type G domain is found at 10–206 (KPHVNIGTIG…AVDESVPDPV (197 aa)). Positions 19–26 (GHVDHGKT) are G1. 19 to 26 (GHVDHGKT) contributes to the GTP binding site. Mg(2+) is bound at residue threonine 26. Residues 62-66 (GITIN) are G2. The segment at 83-86 (DAPG) is G3. GTP contacts are provided by residues 83–87 (DAPGH) and 138–141 (NKAD). The segment at 138–141 (NKAD) is G4. A G5 region spans residues 176-178 (SGL).

It belongs to the TRAFAC class translation factor GTPase superfamily. Classic translation factor GTPase family. EF-Tu/EF-1A subfamily. As to quaternary structure, monomer.

It is found in the cytoplasm. It catalyses the reaction GTP + H2O = GDP + phosphate + H(+). GTP hydrolase that promotes the GTP-dependent binding of aminoacyl-tRNA to the A-site of ribosomes during protein biosynthesis. This Arthrobacter sp. (strain FB24) protein is Elongation factor Tu.